The chain runs to 156 residues: Peptide methionine sulfoxide reductase MsrA (156 aa).

Cysteine 10 is an active-site residue.

It belongs to the MsrA Met sulfoxide reductase family.

It carries out the reaction L-methionyl-[protein] + [thioredoxin]-disulfide + H2O = L-methionyl-(S)-S-oxide-[protein] + [thioredoxin]-dithiol. The catalysed reaction is [thioredoxin]-disulfide + L-methionine + H2O = L-methionine (S)-S-oxide + [thioredoxin]-dithiol. Has an important function as a repair enzyme for proteins that have been inactivated by oxidation. Catalyzes the reversible oxidation-reduction of methionine sulfoxide in proteins to methionine. The sequence is that of Peptide methionine sulfoxide reductase MsrA from Metamycoplasma arthritidis (strain 158L3-1) (Mycoplasma arthritidis).